A 352-amino-acid polypeptide reads, in one-letter code: Small ribosomal subunit biogenesis GTPase RsgA 1 (352 aa).

The interval 1–24 is disordered; that stretch reads MAKKKKLTQGQVRRVRDNQQKRLK. A CP-type G domain is found at 104 to 272; sequence TSVLTRPDYY…LIDSPGVREF (169 aa). GTP-binding positions include 160–163 and 214–222; these read NKID and GQSGVGKSS. Residues C296, C301, H303, and C309 each contribute to the Zn(2+) site.

Belongs to the TRAFAC class YlqF/YawG GTPase family. RsgA subfamily. In terms of assembly, monomer. Associates with 30S ribosomal subunit, binds 16S rRNA. Requires Zn(2+) as cofactor.

It localises to the cytoplasm. In terms of biological role, one of several proteins that assist in the late maturation steps of the functional core of the 30S ribosomal subunit. Helps release RbfA from mature subunits. May play a role in the assembly of ribosomal proteins into the subunit. Circularly permuted GTPase that catalyzes slow GTP hydrolysis, GTPase activity is stimulated by the 30S ribosomal subunit. The sequence is that of Small ribosomal subunit biogenesis GTPase RsgA 1 from Vibrio vulnificus (strain CMCP6).